Consider the following 529-residue polypeptide: Tyrosinase (529 aa).

Positions 1 to 18 (MLLAALCCLLWSFRTSAG) are cleaved as a signal peptide. Residues 19–472 (HFPRACASSK…IKPFLEQASR (454 aa)) are Lumenal-facing. Residues asparagine 86, asparagine 111, and asparagine 161 are each glycosylated (N-linked (GlcNAc...) asparagine). The Cu cation site is built by histidine 180, histidine 202, and histidine 211. 2 N-linked (GlcNAc...) asparagine glycosylation sites follow: asparagine 230 and asparagine 336. Residues histidine 362 and histidine 366 each contribute to the Cu cation site. Asparagine 370 carries N-linked (GlcNAc...) asparagine glycosylation. Histidine 389 contributes to the Cu cation binding site. Residues 473–495 (IWPWLIGAAVVGSVLTAVLGRLT) traverse the membrane as a helical segment. At 496–529 (SLLCRRKRKQLREERQPLLMEKEDYHSLLYQTHV) the chain is on the cytoplasmic side.

It belongs to the tyrosinase family. Forms an OPN3-dependent complex with DCT in response to blue light in melanocytes. The cofactor is Cu(2+). In terms of processing, glycosylated.

It localises to the melanosome membrane. Its subcellular location is the melanosome. The enzyme catalyses 2 L-dopa + O2 = 2 L-dopaquinone + 2 H2O. The catalysed reaction is L-tyrosine + O2 = L-dopaquinone + H2O. It catalyses the reaction 2 5,6-dihydroxyindole-2-carboxylate + O2 = 2 indole-5,6-quinone-2-carboxylate + 2 H2O. This is a copper-containing oxidase that functions in the formation of pigments such as melanins and other polyphenolic compounds. Catalyzes the initial and rate limiting step in the cascade of reactions leading to melanin production from tyrosine. In addition to hydroxylating tyrosine to DOPA (3,4-dihydroxyphenylalanine), also catalyzes the oxidation of DOPA to DOPA-quinone, and possibly the oxidation of DHI (5,6-dihydroxyindole) to indole-5,6 quinone. In Felis catus (Cat), this protein is Tyrosinase (TYR).